The primary structure comprises 371 residues: Putrescine N-methyltransferase 2 (371 aa).

Polar residues-rich tracts occupy residues 1–14 (MEVISTNTNGSTIF) and 23–70 (GHQN…HDNG). The tract at residues 1–70 (MEVISTNTNG…QNGTISHDNG (70 aa)) is disordered. In terms of domain architecture, PABS spans 82-319 (PGWFSEFSAL…GVIGYMLCST (238 aa)). Residues Gln-113, Glu-188, and 219-220 (DG) each bind S-adenosyl-L-methionine. The Proton acceptor role is filled by Asp-238. Tyr-307 provides a ligand contact to S-adenosyl-L-methionine.

Belongs to the class I-like SAM-binding methyltransferase superfamily. Spermidine/spermine synthase family. Mainly expressed in roots.

It carries out the reaction putrescine + S-adenosyl-L-methionine = N-methylputrescine + S-adenosyl-L-homocysteine + H(+). It functions in the pathway alkaloid biosynthesis; nicotine biosynthesis. Involved in the biosynthesis of pyridine alkaloid natural products, leading mainly to the production of anabasine, anatabine, nicotine and nornicotine, effective deterrents against herbivores with antiparasitic and pesticide properties (neurotoxins); nornicotine serves as the precursor in the synthesis of the carcinogen compound N'-nitrosonornicotine (NNN). Methyltransferase that mediates the conversion of putrescine to N-methylputrescine. The sequence is that of Putrescine N-methyltransferase 2 from Nicotiana attenuata (Coyote tobacco).